The sequence spans 94 residues: Co-chaperonin GroES (94 aa).

This sequence belongs to the GroES chaperonin family. In terms of assembly, heptamer of 7 subunits arranged in a ring. Interacts with the chaperonin GroEL.

Its subcellular location is the cytoplasm. Together with the chaperonin GroEL, plays an essential role in assisting protein folding. The GroEL-GroES system forms a nano-cage that allows encapsulation of the non-native substrate proteins and provides a physical environment optimized to promote and accelerate protein folding. GroES binds to the apical surface of the GroEL ring, thereby capping the opening of the GroEL channel. The protein is Co-chaperonin GroES of Listeria monocytogenes serotype 4b (strain CLIP80459).